The primary structure comprises 372 residues: Heat-inducible transcription repressor HrcA (372 aa).

Residues 300-334 form a disordered region; sequence YGRSGAAGEPAGNDPVGEPETESETESQTNDTEPI.

This sequence belongs to the HrcA family.

In terms of biological role, negative regulator of class I heat shock genes (grpE-dnaK-dnaJ and groELS operons). Prevents heat-shock induction of these operons. The chain is Heat-inducible transcription repressor HrcA from Bifidobacterium longum (strain NCC 2705).